The primary structure comprises 364 residues: Anhydro-N-acetylmuramic acid kinase (364 aa).

Position 12 to 19 (12 to 19 (GTSHDAID)) interacts with ATP.

Belongs to the anhydro-N-acetylmuramic acid kinase family.

The enzyme catalyses 1,6-anhydro-N-acetyl-beta-muramate + ATP + H2O = N-acetyl-D-muramate 6-phosphate + ADP + H(+). The protein operates within amino-sugar metabolism; 1,6-anhydro-N-acetylmuramate degradation. It participates in cell wall biogenesis; peptidoglycan recycling. In terms of biological role, catalyzes the specific phosphorylation of 1,6-anhydro-N-acetylmuramic acid (anhMurNAc) with the simultaneous cleavage of the 1,6-anhydro ring, generating MurNAc-6-P. Is required for the utilization of anhMurNAc either imported from the medium or derived from its own cell wall murein, and thus plays a role in cell wall recycling. The sequence is that of Anhydro-N-acetylmuramic acid kinase from Gamma-proteobacterium EBAC31A08.